The following is a 200-amino-acid chain: MSRYRGPRTKIIRRLGALPGLTSKILELESGYIGQSTPNKKVSQYRIRLEEKQKLRFHYGLTERQLLKYVRIARKAKGSTGQILSQTLEMRLDNIIFRLGMSPTIPGARQLVNHRHILINDNTVDIPSYNCEPKDVITVNNRKESVIIKNMDSSRKPKVPNHLTFDSIRFRGSVNQTIDRECIDLKINELLVVEYYSRQV.

The 61-residue stretch at 90 to 150 (MRLDNIIFRL…NRKESVIIKN (61 aa)) folds into the S4 RNA-binding domain.

The protein belongs to the universal ribosomal protein uS4 family. Part of the 30S ribosomal subunit. Contacts protein S5. The interaction surface between S4 and S5 is involved in control of translational fidelity.

The protein resides in the plastid. Its subcellular location is the chloroplast. One of the primary rRNA binding proteins, it binds directly to 16S rRNA where it nucleates assembly of the body of the 30S subunit. In terms of biological role, with S5 and S12 plays an important role in translational accuracy. In Pellia neesiana (Liverwort), this protein is Small ribosomal subunit protein uS4c (rps4).